The sequence spans 649 residues: 1-deoxy-D-xylulose-5-phosphate synthase 1 (649 aa).

Residues histidine 73 and 113–115 (SHA) contribute to the thiamine diphosphate site. Aspartate 144 contributes to the Mg(2+) binding site. Thiamine diphosphate is bound by residues 145 to 146 (GA), asparagine 174, tyrosine 285, and glutamate 367. Asparagine 174 is a Mg(2+) binding site. The segment at 623-649 (LLPGTGTRPGAQEYRPRMPLTDWSEPA) is disordered.

It belongs to the transketolase family. DXPS subfamily. In terms of assembly, homodimer. Requires Mg(2+) as cofactor. The cofactor is thiamine diphosphate.

It catalyses the reaction D-glyceraldehyde 3-phosphate + pyruvate + H(+) = 1-deoxy-D-xylulose 5-phosphate + CO2. The protein operates within metabolic intermediate biosynthesis; 1-deoxy-D-xylulose 5-phosphate biosynthesis; 1-deoxy-D-xylulose 5-phosphate from D-glyceraldehyde 3-phosphate and pyruvate: step 1/1. Functionally, catalyzes the acyloin condensation reaction between C atoms 2 and 3 of pyruvate and glyceraldehyde 3-phosphate to yield 1-deoxy-D-xylulose-5-phosphate (DXP). This is 1-deoxy-D-xylulose-5-phosphate synthase 1 from Kitasatospora griseola (Streptomyces griseolosporeus).